The chain runs to 253 residues: Claudin domain-containing protein 1 (253 aa).

A helical membrane pass occupies residues 5 to 25; sequence FATAFVIACVLSLISTIYMAA. N-linked (GlcNAc...) asparagine glycans are attached at residues asparagine 42 and asparagine 72. 3 helical membrane-spanning segments follow: residues 141–161, 175–195, and 216–236; these read FLLPFVSLGLMCFGALIGLCA, ILHLLAGLCTLGSVSCYVAGI, and FCLACVSAPLQFMASALFIWA.

It belongs to the PMP-22/EMP/MP20 family. Widely distributed in the adult CNS with highest expression in the corpus callosum, caudate nucleus, cerebral cortex, medulla, putamen, spinal cord, substantia nigra and subthalamic nucleus. Weak expression was detected in the adult heart.

Its subcellular location is the cell junction. The protein localises to the tight junction. The protein resides in the cell membrane. Plays a role in negatively regulating the permeability of cells to small molecules. The sequence is that of Claudin domain-containing protein 1 (CLDND1) from Homo sapiens (Human).